A 184-amino-acid polypeptide reads, in one-letter code: Photosystem I assembly protein Ycf4 (184 aa).

2 helical membrane passes run 22–42 (FFWA…GTSS) and 57–77 (IIFF…LFIS).

Belongs to the Ycf4 family.

It is found in the plastid. It localises to the chloroplast thylakoid membrane. Functionally, seems to be required for the assembly of the photosystem I complex. This chain is Photosystem I assembly protein Ycf4, found in Aethionema cordifolium (Lebanon stonecress).